Here is a 157-residue protein sequence, read N- to C-terminus: MIINETKGKAWHGKVKLADTFLKRFRGLMLVKNVNHALVFVLPAETRANASIHMFFMLSDIDVIWLDSSRRVVDFKTAKKWRLYTPKKAAQYIIEGPVGLIRTLEVEEGDLISWTPTEEREKAVPVKSLIPGKINLNGSKNSIAMVESVKEVKANEV.

It belongs to the UPF0127 family.

This chain is UPF0127 protein TK1120, found in Thermococcus kodakarensis (strain ATCC BAA-918 / JCM 12380 / KOD1) (Pyrococcus kodakaraensis (strain KOD1)).